Consider the following 581-residue polypeptide: Phosphatidylinositol N-acetylglucosaminyltransferase subunit Q (581 aa).

5 consecutive transmembrane segments (helical) span residues 276-298, 344-366, 381-403, 446-468, and 478-500; these read ANML…WLHS, LGRF…SPFI, LTVA…YCFY, LFIG…LYYL, and ITVQ…YSLG.

It belongs to the PIGQ family. As to quaternary structure, component of the glycosylphosphatidylinositol-N-acetylglucosaminyltransferase (GPI-GnT) complex composed at least by PIGA, PIGC, PIGH, PIGP, PIGQ, PIGY and DPM2. Interacts with PIGA, PIGH and PIGC.

It is found in the membrane. It functions in the pathway glycolipid biosynthesis; glycosylphosphatidylinositol-anchor biosynthesis. Part of the glycosylphosphatidylinositol-N-acetylglucosaminyltransferase (GPI-GnT) complex that catalyzes the transfer of N-acetylglucosamine from UDP-N-acetylglucosamine to phosphatidylinositol and participates in the first step of GPI biosynthesis. This is Phosphatidylinositol N-acetylglucosaminyltransferase subunit Q from Mus musculus (Mouse).